A 161-amino-acid chain; its full sequence is Allophycocyanin alpha chain (161 aa).

An N4-methylasparagine modification is found at Asn-71. Cys-81 contacts (2R,3E)-phycocyanobilin.

It belongs to the phycobiliprotein family. In terms of assembly, heterodimer of an alpha and a beta chain. Post-translationally, contains one covalently linked phycocyanobilin chromophore.

Its subcellular location is the plastid. It localises to the chloroplast thylakoid membrane. Functionally, light-harvesting photosynthetic bile pigment-protein from the phycobiliprotein complex. Allophycocyanin has a maximum absorption at approximately 650 nanometers. The polypeptide is Allophycocyanin alpha chain (apcA) (Galdieria sulphuraria (Red alga)).